Here is an 89-residue protein sequence, read N- to C-terminus: MAHKKAGGSSRNGRDSESKRLGVKKFGGETVIAGNIIIRQRGTRWHPGDNVGIGKDHTLFALSNGVVSFQRKANNRSYVSVVSMVEAEE.

Residues 1–21 are disordered; it reads MAHKKAGGSSRNGRDSESKRL.

Belongs to the bacterial ribosomal protein bL27 family.

This Bartonella quintana (strain Toulouse) (Rochalimaea quintana) protein is Large ribosomal subunit protein bL27.